Reading from the N-terminus, the 667-residue chain is UvrABC system protein B (667 aa).

In terms of domain architecture, Helicase ATP-binding spans 25–180 (DSLQNQHRFQ…LLRALVSVQY (156 aa)). 38 to 45 (GATGTGKT) provides a ligand contact to ATP. The short motif at 91–114 (YYDYYQPEAYIPVSDTYIEKSSSI) is the Beta-hairpin element. One can recognise a Helicase C-terminal domain in the interval 429-595 (QVDDLLGEIK…PIVKRSSNSI (167 aa)). One can recognise a UVR domain in the interval 626–661 (PELIQQLEAQMKEAAKNLEFESAAKYRDRIKQLRDK).

The protein belongs to the UvrB family. Forms a heterotetramer with UvrA during the search for lesions. Interacts with UvrC in an incision complex.

The protein localises to the cytoplasm. In terms of biological role, the UvrABC repair system catalyzes the recognition and processing of DNA lesions. A damage recognition complex composed of 2 UvrA and 2 UvrB subunits scans DNA for abnormalities. Upon binding of the UvrA(2)B(2) complex to a putative damaged site, the DNA wraps around one UvrB monomer. DNA wrap is dependent on ATP binding by UvrB and probably causes local melting of the DNA helix, facilitating insertion of UvrB beta-hairpin between the DNA strands. Then UvrB probes one DNA strand for the presence of a lesion. If a lesion is found the UvrA subunits dissociate and the UvrB-DNA preincision complex is formed. This complex is subsequently bound by UvrC and the second UvrB is released. If no lesion is found, the DNA wraps around the other UvrB subunit that will check the other stand for damage. The protein is UvrABC system protein B of Microcystis aeruginosa (strain NIES-843 / IAM M-2473).